We begin with the raw amino-acid sequence, 804 residues long: Phenylalanine--tRNA ligase beta subunit (804 aa).

The region spanning 38-148 (RSYLKGFVIA…EDVPIGASFA (111 aa)) is the tRNA-binding domain. A B5 domain is found at 401–476 (PEIRQITFPL…RIYGLDKIKP (76 aa)). D454, D460, E463, and E464 together coordinate Mg(2+). The 94-residue stretch at 710-803 (SSLQMVRRDF…VTRMTGASLR (94 aa)) folds into the FDX-ACB domain.

Belongs to the phenylalanyl-tRNA synthetase beta subunit family. Type 1 subfamily. In terms of assembly, tetramer of two alpha and two beta subunits. The cofactor is Mg(2+).

Its subcellular location is the cytoplasm. The catalysed reaction is tRNA(Phe) + L-phenylalanine + ATP = L-phenylalanyl-tRNA(Phe) + AMP + diphosphate + H(+). This is Phenylalanine--tRNA ligase beta subunit from Bartonella henselae (strain ATCC 49882 / DSM 28221 / CCUG 30454 / Houston 1) (Rochalimaea henselae).